We begin with the raw amino-acid sequence, 149 residues long: UPF0260 protein Pmen_1776 (149 aa).

This sequence belongs to the UPF0260 family.

The protein is UPF0260 protein Pmen_1776 of Ectopseudomonas mendocina (strain ymp) (Pseudomonas mendocina).